The following is a 279-amino-acid chain: Fatty acid metabolism regulator protein (279 aa).

An HTH gntR-type domain is found at 6-74 (KSPAGFAEKY…HGKPTKVNQF (69 aa)). A DNA-binding region (H-T-H motif) is located at residues 34–53 (ERELSELIGVTRTTLREVLQ).

Homodimer.

It localises to the cytoplasm. Its function is as follows. Multifunctional regulator of fatty acid metabolism. The sequence is that of Fatty acid metabolism regulator protein from Vibrio parahaemolyticus serotype O3:K6 (strain RIMD 2210633).